Here is a 573-residue protein sequence, read N- to C-terminus: Probable D-xylulose kinase A (573 aa).

The substrate site is built by histidine 97, arginine 168, aspartate 284, and asparagine 285. Residues tryptophan 366, 471 to 472 (GG), and asparagine 475 each bind ATP.

This sequence belongs to the FGGY kinase family.

It localises to the cytoplasm. It carries out the reaction D-xylulose + ATP = D-xylulose 5-phosphate + ADP + H(+). In terms of biological role, highly specific D-xylulose kinase which participates in the catabolism of xylose. Xylose is a major component of hemicelluloses such as xylan. Most fungi utilize D-xylose via three enzymatic reactions, xylose reductase (XR), xylitol dehydrogenase (XDH), and xylulokinase, to form xylulose 5-phosphate, which enters pentose phosphate pathway. The polypeptide is Probable D-xylulose kinase A (xkiA) (Neosartorya fischeri (strain ATCC 1020 / DSM 3700 / CBS 544.65 / FGSC A1164 / JCM 1740 / NRRL 181 / WB 181) (Aspergillus fischerianus)).